The following is a 102-amino-acid chain: NADH-quinone oxidoreductase subunit K (102 aa).

3 helical membrane passes run 5–25 (ITHYLTVSALMFTIGIAGIFL), 31–51 (IIILMSIELILLSVNINFVAF), and 66–86 (FVLTVAAAEAAIGLAILVVFF).

This sequence belongs to the complex I subunit 4L family. As to quaternary structure, NDH-1 is composed of 14 different subunits. Subunits NuoA, H, J, K, L, M, N constitute the membrane sector of the complex.

It is found in the cell inner membrane. The enzyme catalyses a quinone + NADH + 5 H(+)(in) = a quinol + NAD(+) + 4 H(+)(out). NDH-1 shuttles electrons from NADH, via FMN and iron-sulfur (Fe-S) centers, to quinones in the respiratory chain. The immediate electron acceptor for the enzyme in this species is believed to be ubiquinone. Couples the redox reaction to proton translocation (for every two electrons transferred, four hydrogen ions are translocated across the cytoplasmic membrane), and thus conserves the redox energy in a proton gradient. The chain is NADH-quinone oxidoreductase subunit K from Bartonella tribocorum (strain CIP 105476 / IBS 506).